We begin with the raw amino-acid sequence, 267 residues long: Small ribosomal subunit protein uS3 (267 aa).

The KH type-2 domain maps to 39 to 114; sequence IRKYLETNLK…RVNINIVEIR (76 aa). Residues 229–248 are compositionally biased toward low complexity; the sequence is ANNRGRGNNRGRGNSRQNGG. Residues 229–267 form a disordered region; that stretch reads ANNRGRGNNRGRGNSRQNGGRSRRPRQGQASTQGRGGNN.

The protein belongs to the universal ribosomal protein uS3 family. In terms of assembly, part of the 30S ribosomal subunit. Forms a tight complex with proteins S10 and S14.

Its function is as follows. Binds the lower part of the 30S subunit head. Binds mRNA in the 70S ribosome, positioning it for translation. The sequence is that of Small ribosomal subunit protein uS3 from Oenococcus oeni (strain ATCC BAA-331 / PSU-1).